Here is a 173-residue protein sequence, read N- to C-terminus: Dual-action ribosomal maturation protein DarP (173 aa).

It belongs to the DarP family.

Its subcellular location is the cytoplasm. Its function is as follows. Member of a network of 50S ribosomal subunit biogenesis factors which assembles along the 30S-50S interface, preventing incorrect 23S rRNA structures from forming. Promotes peptidyl transferase center (PTC) maturation. This chain is Dual-action ribosomal maturation protein DarP, found in Pseudomonas fluorescens (strain ATCC BAA-477 / NRRL B-23932 / Pf-5).